The chain runs to 196 residues: Pyridoxal 5'-phosphate synthase subunit PdxT (196 aa).

An L-glutamine-binding site is contributed by 46 to 48 (GES). Cys78 acts as the Nucleophile in catalysis. Residues Arg105 and 133–134 (IR) each bind L-glutamine. Catalysis depends on charge relay system residues His169 and Glu171.

This sequence belongs to the glutaminase PdxT/SNO family. In the presence of PdxS, forms a dodecamer of heterodimers. Only shows activity in the heterodimer.

The enzyme catalyses aldehydo-D-ribose 5-phosphate + D-glyceraldehyde 3-phosphate + L-glutamine = pyridoxal 5'-phosphate + L-glutamate + phosphate + 3 H2O + H(+). It catalyses the reaction L-glutamine + H2O = L-glutamate + NH4(+). It functions in the pathway cofactor biosynthesis; pyridoxal 5'-phosphate biosynthesis. Catalyzes the hydrolysis of glutamine to glutamate and ammonia as part of the biosynthesis of pyridoxal 5'-phosphate. The resulting ammonia molecule is channeled to the active site of PdxS. The polypeptide is Pyridoxal 5'-phosphate synthase subunit PdxT (Geobacillus kaustophilus (strain HTA426)).